A 498-amino-acid chain; its full sequence is ATP synthase subunit beta, chloroplastic (498 aa).

ATP is bound at residue 172-179 (GGAGVGKT).

The protein belongs to the ATPase alpha/beta chains family. In terms of assembly, F-type ATPases have 2 components, CF(1) - the catalytic core - and CF(0) - the membrane proton channel. CF(1) has five subunits: alpha(3), beta(3), gamma(1), delta(1), epsilon(1). CF(0) has four main subunits: a(1), b(1), b'(1) and c(9-12).

Its subcellular location is the plastid. It localises to the chloroplast thylakoid membrane. The catalysed reaction is ATP + H2O + 4 H(+)(in) = ADP + phosphate + 5 H(+)(out). Its function is as follows. Produces ATP from ADP in the presence of a proton gradient across the membrane. The catalytic sites are hosted primarily by the beta subunits. The protein is ATP synthase subunit beta, chloroplastic of Nicotiana tabacum (Common tobacco).